The following is an 85-amino-acid chain: MLVNIGFGNIVSLSRIIAVVNPGSSPMKRMKDEARKRGKLIDATEGRKTRSIIITDSDHIILSALQVETILQRINEINRVEDGDL.

The protein belongs to the RemA family.

This Thermodesulfovibrio yellowstonii (strain ATCC 51303 / DSM 11347 / YP87) protein is Putative regulatory protein THEYE_A0405.